A 520-amino-acid polypeptide reads, in one-letter code: MSLRFHTLPTLPRAVKPGCRELLCLLVIAVMVSPSSSGLCPTACICATDIVSCTNKNLSKVPGNLFRLIKRLDLSYNRIGLLDADWIPVSFVKLSTLIVRHNNITSISTGSFSTTPNLKCLDLSSNRLKSVKSAMFQELKVLEVLLLYNNHISYLDPAAFGGLSHLQKLYLSGNFLTKFPMDLYVGRFKLADLTFLDVSYNQIASIPMHHINLVPGKQLRGIFLHGNPFVCDCSLYSLLTFWYRRHFNSVTDFKHDYTCRLWLDSRHSHQLLLLQDSFLNCSHSVINGSFHALGFIHEAQVGERAIVHCDGKTGNGNTDFIWVGPDNRLLEPDKDTGNFRVFYNGSLVIENPGFEDAGVYSCIAMNRQRLLNETVDIMINVSNFTINRSHHAHEAFNTAFTTLAACVVSIVLVLLYLYLTPCPCKCRDKRQKNALNQSNAHSSILSPGPTRDASAEDRKAGKRVVFLEPLKDPAVGQNGKVKLVPSKTVIAEGILKSSRAKSDSDSVNSVFSDTPFVAST.

A signal peptide spans 1–37 (MSLRFHTLPTLPRAVKPGCRELLCLLVIAVMVSPSSS). The LRRNT domain maps to 38–67 (GLCPTACICATDIVSCTNKNLSKVPGNLFR). The Extracellular portion of the chain corresponds to 38-398 (GLCPTACICA…SHHAHEAFNT (361 aa)). Cystine bridges form between Cys-40–Cys-46 and Cys-44–Cys-53. The N-linked (GlcNAc...) asparagine glycan is linked to Asn-57. LRR repeat units lie at residues 68 to 89 (LIKR…WIPV), 93 to 114 (KLST…SFST), 117 to 138 (NLKC…MFQE), 141 to 162 (VLEV…AFGG), 165 to 186 (HLQK…LYVG), and 192 to 213 (DLTF…HINL). Asn-103 carries an N-linked (GlcNAc...) asparagine glycan. The region spanning 227–283 (NPFVCDCSLYSLLTFWYRRHFNSVTDFKHDYTCRLWLDSRHSHQLLLLQDSFLNCSH) is the LRRCT domain. 2 cysteine pairs are disulfide-bonded: Cys-231–Cys-259 and Cys-233–Cys-281. Asn-280, Asn-287, Asn-344, Asn-372, Asn-380, Asn-383, and Asn-387 each carry an N-linked (GlcNAc...) asparagine glycan. The region spanning 288–378 (GSFHALGFIH…RLLNETVDIM (91 aa)) is the Ig-like C2-type domain. The cysteines at positions 309 and 362 are disulfide-linked. Residues 399–419 (AFTTLAACVVSIVLVLLYLYL) traverse the membrane as a helical segment. Over 420–520 (TPCPCKCRDK…FSDTPFVAST (101 aa)) the chain is Cytoplasmic. 2 disordered regions span residues 437 to 458 (QSNA…AEDR) and 498 to 520 (SRAK…VAST).

This sequence belongs to the immunoglobulin superfamily. AMIGO family. Binds itself as well as AMIGO1 and AMIGO3. In terms of tissue distribution, highest levels in the lung. High levels in cerebellar granule neurons and Purkinje cells. Also in pyramidal cells between CA1 and CA3 regions of the hippocampus and granule cells of the dentate gyrus.

The protein resides in the cell membrane. It localises to the nucleus. Functionally, required for depolarization-dependent survival of cultured cerebellar granule neurons. May mediate homophilic as well as heterophilic cell-cell interaction with AMIGO1 or AMIGO3. May contribute to signal transduction through its intracellular domain. The protein is Amphoterin-induced protein 2 of Rattus norvegicus (Rat).